A 553-amino-acid chain; its full sequence is Urocanate hydratase (553 aa).

NAD(+)-binding positions include 51-52, Gln-129, 175-177, Glu-195, Arg-200, 241-242, 262-266, 272-273, and Tyr-321; these read GG, GMG, NA, QTSAH, and YL. Cys-409 is a catalytic residue. NAD(+) is bound at residue Gly-491.

Belongs to the urocanase family. Requires NAD(+) as cofactor.

The protein localises to the cytoplasm. It carries out the reaction 4-imidazolone-5-propanoate = trans-urocanate + H2O. It participates in amino-acid degradation; L-histidine degradation into L-glutamate; N-formimidoyl-L-glutamate from L-histidine: step 2/3. Its function is as follows. Catalyzes the conversion of urocanate to 4-imidazolone-5-propionate. This Sphingopyxis alaskensis (strain DSM 13593 / LMG 18877 / RB2256) (Sphingomonas alaskensis) protein is Urocanate hydratase.